Here is a 203-residue protein sequence, read N- to C-terminus: Cardiotrophin-1 (203 aa).

It belongs to the IL-6 superfamily. Expressed in the ventricle and atrium of adult rats. Also detected in the lung, kidney, liver, skeletal muscle, stomach and urinary bladder. Not detected in brain, colon, testis, spleen or thymus. Overexpressed in the ventricles in the case of hypertension and hypertrophy.

Its subcellular location is the secreted. Functionally, induces cardiac myocyte hypertrophy in vitro. Binds to and activates the ILST/gp130 receptor. The chain is Cardiotrophin-1 (Ctf1) from Rattus norvegicus (Rat).